Reading from the N-terminus, the 203-residue chain is Protein ILM1 (203 aa).

Residues 1 to 3 (MAQ) are Cytoplasmic-facing. The chain crosses the membrane as a helical span at residues 4-24 (ALNSTNIAFFRVAFLFTIAFF). The Lumenal segment spans residues 25–58 (CLKNVNSILQNTYFIVLTQAMNLPQLTLSRYSGQ). The helical transmembrane segment at 59–79 (LGLFALLFTLNGVHDLIPLLE) threads the bilayer. Over 80–92 (NNVKYFQSVVPVR) the chain is Cytoplasmic. A helical transmembrane segment spans residues 93-113 (LLIFFILTSISYLWESNFYVH). Position 114 (N114) is a topological domain, lumenal. A helical transmembrane segment spans residues 115 to 135 (NSVFIYCFAEVWINFLLYNAI). The Cytoplasmic segment spans residues 136–203 (REEKNEEFKR…KGNDDSDAKK (68 aa)). Positions 175–187 (INDEENDDEDGKD) are enriched in acidic residues. The segment at 175–203 (INDEENDDEDGKDNDDNNEKGNDDSDAKK) is disordered. A compositionally biased stretch (basic and acidic residues) spans 188–203 (NDDNNEKGNDDSDAKK).

This sequence belongs to the ILM1 family.

The protein localises to the endoplasmic reticulum membrane. This chain is Protein ILM1 (ILM1), found in Saccharomyces cerevisiae (strain ATCC 204508 / S288c) (Baker's yeast).